A 63-amino-acid polypeptide reads, in one-letter code: Small ribosomal subunit protein eS17 (63 aa).

It belongs to the eukaryotic ribosomal protein eS17 family.

The chain is Small ribosomal subunit protein eS17 from Methanococcus maripaludis (strain C6 / ATCC BAA-1332).